The following is a 367-amino-acid chain: Quinolinate synthase (367 aa).

Iminosuccinate contacts are provided by His45 and Ser62. [4Fe-4S] cluster is bound at residue Cys109. Iminosuccinate-binding positions include 140–142 (YVN) and Ser161. Cys229 contributes to the [4Fe-4S] cluster binding site. Iminosuccinate-binding positions include 255–257 (HPE) and Thr272. Cys319 provides a ligand contact to [4Fe-4S] cluster.

The protein belongs to the quinolinate synthase family. Type 3 subfamily. [4Fe-4S] cluster serves as cofactor.

The protein resides in the cytoplasm. The enzyme catalyses iminosuccinate + dihydroxyacetone phosphate = quinolinate + phosphate + 2 H2O + H(+). It functions in the pathway cofactor biosynthesis; NAD(+) biosynthesis; quinolinate from iminoaspartate: step 1/1. In terms of biological role, catalyzes the condensation of iminoaspartate with dihydroxyacetone phosphate to form quinolinate. The chain is Quinolinate synthase from Geobacillus thermodenitrificans (strain NG80-2).